The primary structure comprises 30 residues: Cysteine-rich venom protein okinavin (30 aa).

Residues 1 to 30 (SVDFDSESPRKPXIQNEIVDLHNPLRRXVN) form a disordered region.

Belongs to the CRISP family. Contains 8 disulfide bonds. As to expression, expressed by the venom gland.

Its subcellular location is the secreted. Its function is as follows. Inhibits calcium-activated potassium channels (KCa), voltage-gated potassium channel (Kv), and the calcium release channel/ryanodine receptor (RyR). The chain is Cysteine-rich venom protein okinavin from Ovophis okinavensis (Ryukyu Island pit viper).